The sequence spans 415 residues: Queuine tRNA-ribosyltransferase accessory subunit 2 (415 aa).

Cysteine 351, cysteine 353, cysteine 356, and histidine 382 together coordinate Zn(2+).

This sequence belongs to the queuine tRNA-ribosyltransferase family. QTRT2 subfamily. As to quaternary structure, heterodimer of a catalytic subunit qtrt1 and an accessory subunit qtrt2. Requires Zn(2+) as cofactor.

The protein resides in the cytoplasm. The protein localises to the mitochondrion outer membrane. In terms of biological role, non-catalytic subunit of the queuine tRNA-ribosyltransferase (TGT) that catalyzes the base-exchange of a guanine (G) residue with queuine (Q) at position 34 (anticodon wobble position) in tRNAs with GU(N) anticodons (tRNA-Asp, -Asn, -His and -Tyr), resulting in the hypermodified nucleoside queuosine (7-(((4,5-cis-dihydroxy-2-cyclopenten-1-yl)amino)methyl)-7-deazaguanosine). This chain is Queuine tRNA-ribosyltransferase accessory subunit 2, found in Xenopus laevis (African clawed frog).